A 583-amino-acid polypeptide reads, in one-letter code: 2-succinyl-5-enolpyruvyl-6-hydroxy-3-cyclohexene-1-carboxylate synthase (583 aa).

Belongs to the TPP enzyme family. MenD subfamily. In terms of assembly, homodimer. Mg(2+) serves as cofactor. Requires Mn(2+) as cofactor. The cofactor is thiamine diphosphate.

The enzyme catalyses isochorismate + 2-oxoglutarate + H(+) = 5-enolpyruvoyl-6-hydroxy-2-succinyl-cyclohex-3-ene-1-carboxylate + CO2. Its pathway is quinol/quinone metabolism; 1,4-dihydroxy-2-naphthoate biosynthesis; 1,4-dihydroxy-2-naphthoate from chorismate: step 2/7. It participates in quinol/quinone metabolism; menaquinone biosynthesis. Catalyzes the thiamine diphosphate-dependent decarboxylation of 2-oxoglutarate and the subsequent addition of the resulting succinic semialdehyde-thiamine pyrophosphate anion to isochorismate to yield 2-succinyl-5-enolpyruvyl-6-hydroxy-3-cyclohexene-1-carboxylate (SEPHCHC). The protein is 2-succinyl-5-enolpyruvyl-6-hydroxy-3-cyclohexene-1-carboxylate synthase of Roseiflexus sp. (strain RS-1).